The chain runs to 632 residues: tRNA-guanine(15) transglycosylase (632 aa).

The active-site Nucleophile is Asp-86. Residues Asp-121 and Gly-186 each coordinate substrate. One can recognise a PUA domain in the interval 553–628 (NLRVFVKNES…IAVKIHEGRD (76 aa)).

Belongs to the archaeosine tRNA-ribosyltransferase family. It depends on Zn(2+) as a cofactor.

It catalyses the reaction guanosine(15) in tRNA + 7-cyano-7-deazaguanine = 7-cyano-7-carbaguanosine(15) in tRNA + guanine. It participates in tRNA modification; archaeosine-tRNA biosynthesis. Exchanges the guanine residue with 7-cyano-7-deazaguanine (preQ0) at position 15 in the dihydrouridine loop (D-loop) of archaeal tRNAs. This Thermoplasma volcanium (strain ATCC 51530 / DSM 4299 / JCM 9571 / NBRC 15438 / GSS1) protein is tRNA-guanine(15) transglycosylase.